An 804-amino-acid polypeptide reads, in one-letter code: Leucine--tRNA ligase (804 aa).

Residues 40–51 (PYPSGAGLHVGH) carry the 'HIGH' region motif. Residues 576–580 (KMSKS) carry the 'KMSKS' region motif. Lys579 is an ATP binding site.

This sequence belongs to the class-I aminoacyl-tRNA synthetase family.

Its subcellular location is the cytoplasm. The catalysed reaction is tRNA(Leu) + L-leucine + ATP = L-leucyl-tRNA(Leu) + AMP + diphosphate. This is Leucine--tRNA ligase from Bacillus subtilis (strain 168).